A 100-amino-acid chain; its full sequence is Small ribosomal subunit protein uS14c (100 aa).

It belongs to the universal ribosomal protein uS14 family. In terms of assembly, part of the 30S ribosomal subunit.

The protein resides in the plastid. Its subcellular location is the chloroplast. In terms of biological role, binds 16S rRNA, required for the assembly of 30S particles. The protein is Small ribosomal subunit protein uS14c of Euglena gracilis.